The following is a 1228-amino-acid chain: P3N-PIPO polyprotein (1228 aa).

Positions 408–547 constitute a Peptidase S30 domain; sequence IVGNSKINYI…RSVYAKMDQY (140 aa). Active-site for P1 proteinase activity residues include His-456, Asp-465, and Ser-499. Positions 598 to 601 match the Involved in interaction with stylet and aphid transmission motif; the sequence is KITC. An Involved in virions binding and aphid transmission motif is present at residues 856-858; it reads PTK. In terms of domain architecture, Peptidase C6 spans 882–1004; that stretch reads MYIAKKGYCY…DSEMKHYIVG (123 aa). Catalysis depends on for helper component proteinase activity residues Cys-890 and His-963.

This sequence belongs to the potyviridae P3N-PIPO polyprotein family. In terms of assembly, interacts (via PIPO domain) with host PCaP1 protein; this interaction may help to anchor the movement complex to the plasma membrane from which the complex could move to the plasmodesmata. Potyviral RNA is expressed as two polyproteins which undergo post-translational proteolytic processing. Genome polyprotein is processed by NIa-pro, P1 and HC-pro proteinases resulting in the production of at least ten individual proteins. P3N-PIPO is cleaved by P1 and HC-pro proteinases resulting in the production of three individual proteins. The P1 proteinase and the HC-pro cleave only their respective C-termini autocatalytically.

It localises to the host cell junction. The protein resides in the host plasmodesma. The enzyme catalyses Hydrolyzes a Gly-|-Gly bond at its own C-terminus, commonly in the sequence -Tyr-Xaa-Val-Gly-|-Gly, in the processing of the potyviral polyprotein.. Required for aphid transmission and also has proteolytic activity. Only cleaves a Gly-Gly dipeptide at its own C-terminus. Interacts with virions and aphid stylets. Acts as a suppressor of RNA-mediated gene silencing, also known as post-transcriptional gene silencing (PTGS), a mechanism of plant viral defense that limits the accumulation of viral RNAs. May have RNA-binding activity. In terms of biological role, allows efficient cell to cell propagation, by bypassing the host cell wall barrier. Transports viral genome to neighboring plant cells directly through plasmosdesmata, without any budding. This is P3N-PIPO polyprotein from Carica papaya (Papaya).